We begin with the raw amino-acid sequence, 831 residues long: Sodium/hydrogen exchanger 3 (831 aa).

Residues Met1–Gly28 form the signal peptide. Residues Ile29 to His48 lie on the Extracellular side of the membrane. A helical membrane pass occupies residues Val49–Leu71. Residues Ser72 to Val79 are Cytoplasmic-facing. The helical transmembrane segment at Pro80–Ala99 threads the bilayer. Residues Asp100–Thr108 lie on the Extracellular side of the membrane. A helical membrane pass occupies residues Pro109–Tyr126. Topologically, residues Phe127–Pro129 are cytoplasmic. The chain crosses the membrane as a helical span at residues Asn130–Ser165. A 1,2-diacyl-sn-glycero-3-phospho-(1D-myo-inositol) is bound by residues Gly135, Gly138, and Thr139. The Extracellular segment spans residues Gly166 to Phe178. A helical transmembrane segment spans residues Leu179–Val200. Residues His201–Val202 are Cytoplasmic-facing. A helical membrane pass occupies residues Asn203 to Leu234. Residues Gly235–Gly241 are Extracellular-facing. The chain crosses the membrane as a helical span at residues Val242–Thr276. Residues Lys277–His278 lie on the Cytoplasmic side of the membrane. The chain crosses the membrane as a helical span at residues Val279–Leu301. Residues Ser302 to Leu303 are Extracellular-facing. Residues Ser304 to Val320 form a helical membrane-spanning segment. Topologically, residues Lys321–Gln327 are cytoplasmic. A helical membrane pass occupies residues Ser328–Val356. Over Asp357–Asn364 the chain is Extracellular. A helical membrane pass occupies residues Thr365–Gln386. Over Thr387–Glu399 the chain is Cytoplasmic. Position 395 (Met395) interacts with a 1,2-diacyl-sn-glycero-3-phospho-(1D-myo-inositol). The chain crosses the membrane as a helical span at residues Thr400–Leu423. Residues Asp424–Glu430 lie on the Extracellular side of the membrane. A helical membrane pass occupies residues Lys431–Arg464. Residues Ser465–Met831 are Cytoplasmic-facing. 3 residues coordinate a 1,2-diacyl-sn-glycero-3-phospho-(1D-myo-inositol): Gln494, Ile495, and His497. Residues Ser552 and Ser560 each carry the phosphoserine modification. Positions Arg573–Glu587 are interaction with EZR. The interaction with NHERF4 stretch occupies residues Asn588 to Ala665. An interaction with AHCYL1 region spans residues Val589–Pro693. 2 positions are modified to phosphoserine: Ser590 and Ser605. At Ser661 the chain carries Phosphoserine; by SGK1. A phosphoserine mark is found at Ser716, Ser807, and Ser810. The disordered stretch occupies residues Val808–Met831. The segment covering Gln822 to Met831 has biased composition (polar residues).

It belongs to the monovalent cation:p,roton antiporter 1 (CPA1) transporter (TC 2.A.36) family. As to quaternary structure, homodimer. Found in the forms of complex and dynamic macromolecular complexes. Binds NHERF1 and NHERF2. Interacts with NHERF4 and interactions decrease in response to elevated calcium ion levels. Interacts with PDZK1 (via C-terminal PDZ domain). Interacts with CHP1; this interaction increases trafficking and activity at the plasma membrane of SLC9A3. Interacts with CHP2 and SHANK2. Interacts with AHCYL1; the interaction is required for SLC9A3 activity. Interacts with EZR; interaction targets SLC9A3 to the apical membrane. Interacts with SNX27 (via PDZ domains); directs SLC9A3 membrane insertion from early endosomes to the plasma membrane. In terms of processing, phosphorylated by PRKACA at Ser-552 and Ser-605, which inhibits activity. Phosphorylation of Ser-605 is essential for cAMP-mediated inhibition of SLC9A3. Phosphorylation at Ser-661 by SGK1 is associated with increased abundance at the cell membrane. Phosphorylation at Ser-716 by CSNK2A1 regulates SLC9A3 activity through the formation of multiple signaling complexes. As to expression, most abundant in colon and small intestine, followed by kidney and stomach. In kidney, expressed in proximal tubules and outer medulla (at protein level).

It localises to the apical cell membrane. The protein localises to the cell membrane. It is found in the recycling endosome membrane. Its subcellular location is the early endosome membrane. It catalyses the reaction Na(+)(in) + H(+)(out) = Na(+)(out) + H(+)(in). Its activity is regulated as follows. Seems to switch between active and inactive modes in response to various stimuli. Activated directly or indirectly by membrane phosphatidylinositol (PIs). Regulated by a variety of auxiliary proteins, which facilitate the maturation, cell surface expression and function of the transporter. Inhibited specifically by the drug tenapanor. Its function is as follows. Plasma membrane Na(+)/H(+) antiporter. Exchanges intracellular H(+) ions for extracellular Na(+) in 1:1 stoichiometry, playing a key role in salt and fluid absorption and pH homeostasis. Major apical Na(+)/H(+) exchanger in kidney and intestine playing an important role in renal and intestine Na(+) absorption and blood pressure regulation. The polypeptide is Sodium/hydrogen exchanger 3 (Slc9a3) (Rattus norvegicus (Rat)).